Consider the following 768-residue polypeptide: Protein transport protein Sec23A (768 aa).

T2 is subject to N-acetylthreonine. C61, C66, C85, and C88 together coordinate Zn(2+). T308 is modified (phosphothreonine). The Gelsolin-like repeat unit spans residues 632–718; that stretch reads PEPVLLDSSS…EHGGSQARFL (87 aa).

The protein belongs to the SEC23/SEC24 family. SEC23 subfamily. COPII is composed of at least five proteins: the Sec23/24 complex, the Sec13/31 complex and Sar1. Interacts with SEC23IP. Interacts with HTR4. Interacts with SEC16A. Interacts with SLC6A4. Interacts (as part of the Sec23/24 complex) with SEC22B; recruits SEC22B into COPII-coated vesicles and allows the transport of this cargo from the endoplasmic reticulum to the Golgi. Interacts (via Gelsolin-like repeat) with MIA2 and MIA3; specifically involved in the transport of large cargos like the collagen COL7A1. Interacts with DDHD1. Interacts with TMEM39A. Interacts with SACM1L; this interaction is reduced in the absence of TMEM39A. Interacts with kinase FAM20C; transport of FAM20C from the endoplasmic reticulum to the Golgi is likely to be mediated by COPII vesicles.

It localises to the cytoplasmic vesicle. It is found in the COPII-coated vesicle membrane. The protein localises to the endoplasmic reticulum membrane. Its subcellular location is the cytoplasm. The protein resides in the cytosol. In terms of biological role, component of the coat protein complex II (COPII) which promotes the formation of transport vesicles from the endoplasmic reticulum (ER). The coat has two main functions, the physical deformation of the endoplasmic reticulum membrane into vesicles and the selection of cargo molecules for their transport to the Golgi complex. Required for the translocation of insulin-induced glucose transporter SLC2A4/GLUT4 to the cell membrane. The sequence is that of Protein transport protein Sec23A from Bos taurus (Bovine).